The sequence spans 315 residues: Glutamyl-Q tRNA(Asp) synthetase (315 aa).

Residues 21-25 (RFAPS) and Glu-63 contribute to the L-glutamate site. A 'HIGH' region motif is present at residues 24–34 (PSPSGLLHFGS). Residues Cys-119, Cys-121, Tyr-133, and Cys-137 each coordinate Zn(2+). L-glutamate-binding residues include Tyr-190 and Arg-208. The 'KMSKS' region signature appears at 251–255 (KLSKQ). Residue Lys-254 coordinates ATP.

This sequence belongs to the class-I aminoacyl-tRNA synthetase family. GluQ subfamily. It depends on Zn(2+) as a cofactor.

Its function is as follows. Catalyzes the tRNA-independent activation of glutamate in presence of ATP and the subsequent transfer of glutamate onto a tRNA(Asp). Glutamate is transferred on the 2-amino-5-(4,5-dihydroxy-2-cyclopenten-1-yl) moiety of the queuosine in the wobble position of the QUC anticodon. This chain is Glutamyl-Q tRNA(Asp) synthetase, found in Colwellia psychrerythraea (strain 34H / ATCC BAA-681) (Vibrio psychroerythus).